Reading from the N-terminus, the 207-residue chain is Small ribosomal subunit protein uS4 (207 aa).

Residues A26–S47 are disordered. A compositionally biased stretch (polar residues) spans N28–N39. The S4 RNA-binding domain occupies R95–I158.

This sequence belongs to the universal ribosomal protein uS4 family. Part of the 30S ribosomal subunit. Contacts protein S5. The interaction surface between S4 and S5 is involved in control of translational fidelity.

Its function is as follows. One of the primary rRNA binding proteins, it binds directly to 16S rRNA where it nucleates assembly of the body of the 30S subunit. With S5 and S12 plays an important role in translational accuracy. In Orientia tsutsugamushi (strain Boryong) (Rickettsia tsutsugamushi), this protein is Small ribosomal subunit protein uS4.